Reading from the N-terminus, the 276-residue chain is Glutamate 5-kinase (276 aa).

Position 14 (Lys14) interacts with ATP. Ser54, Asp141, and Asn157 together coordinate substrate. ATP-binding positions include 177 to 178 and 219 to 225; these read SD and TGGMLTK.

It belongs to the glutamate 5-kinase family.

Its subcellular location is the cytoplasm. The catalysed reaction is L-glutamate + ATP = L-glutamyl 5-phosphate + ADP. It participates in amino-acid biosynthesis; L-proline biosynthesis; L-glutamate 5-semialdehyde from L-glutamate: step 1/2. In terms of biological role, catalyzes the transfer of a phosphate group to glutamate to form L-glutamate 5-phosphate. This chain is Glutamate 5-kinase, found in Listeria monocytogenes serotype 4b (strain CLIP80459).